A 127-amino-acid polypeptide reads, in one-letter code: uncharacterized protein (127 aa).

Residues 69-94 form a disordered region; the sequence is GDGGSVPEKGKHGILGAQGQEHPGLN.

This is an uncharacterized protein from Homo sapiens (Human).